The chain runs to 65 residues: Prokaryotic ubiquitin-like protein Pup (65 aa).

Residues Met-1–Glu-14 show a composition bias toward basic and acidic residues. A disordered region spans residues Met-1 to Ala-35. Residues Val-21–Phe-59 are ARC ATPase binding. Positions Ala-26 to Glu-49 form a coiled coil. Position 65 is a deamidated glutamine (Gln-65). Residue Gln-65 forms an Isoglutamyl lysine isopeptide (Gln-Lys) (interchain with K-? in acceptor proteins) linkage.

It belongs to the prokaryotic ubiquitin-like protein family. Strongly interacts with the proteasome-associated ATPase ARC through a hydrophobic interface; the interacting region of Pup lies in its C-terminal half. There is one Pup binding site per ARC hexamer ring. Is modified by deamidation of its C-terminal glutamine to glutamate by the deamidase Dop, a prerequisite to the subsequent pupylation process.

The protein operates within protein degradation; proteasomal Pup-dependent pathway. Its function is as follows. Protein modifier that is covalently attached to lysine residues of substrate proteins, thereby targeting them for proteasomal degradation. The tagging system is termed pupylation. This Kineococcus radiotolerans (strain ATCC BAA-149 / DSM 14245 / SRS30216) protein is Prokaryotic ubiquitin-like protein Pup.